Consider the following 602-residue polypeptide: Probable translation initiation factor IF-2 (602 aa).

The region spanning 10–227 (LRQPIVVVLG…LLAGLTQNYM (218 aa)) is the tr-type G domain. The G1 stretch occupies residues 19 to 26 (GHVDHGKT). A GTP-binding site is contributed by 19 to 26 (GHVDHGKT). Positions 44–48 (EMTQE) are G2. The tract at residues 83-86 (DTPG) is G3. GTP contacts are provided by residues 83-87 (DTPGH) and 137-140 (NKID). Residues 137 to 140 (NKID) form a G4 region. The G5 stretch occupies residues 205–207 (SAK).

This sequence belongs to the TRAFAC class translation factor GTPase superfamily. Classic translation factor GTPase family. IF-2 subfamily.

Function in general translation initiation by promoting the binding of the formylmethionine-tRNA to ribosomes. Seems to function along with eIF-2. The sequence is that of Probable translation initiation factor IF-2 from Sulfurisphaera tokodaii (strain DSM 16993 / JCM 10545 / NBRC 100140 / 7) (Sulfolobus tokodaii).